We begin with the raw amino-acid sequence, 156 residues long: Small ribosomal subunit protein uS7c (156 aa).

It belongs to the universal ribosomal protein uS7 family. As to quaternary structure, part of the 30S ribosomal subunit.

It localises to the plastid. It is found in the chloroplast. One of the primary rRNA binding proteins, it binds directly to 16S rRNA where it nucleates assembly of the head domain of the 30S subunit. The protein is Small ribosomal subunit protein uS7c (rps7) of Bowenia serrulata (Byfield fern).